The primary structure comprises 836 residues: Lon protease (836 aa).

Residues 41-233 form the Lon N-terminal domain; the sequence is LPVLPLRNTV…RLIHFLNREV (193 aa). 385 to 392 contacts ATP; the sequence is GPPGVGKT. One can recognise a Lon proteolytic domain in the interval 627–811; sequence VMLSGVAVGL…DDLIDYVLEP (185 aa). Residues Ser-714 and Lys-757 contribute to the active site. The segment at 816–836 is disordered; it reads APQFKVEDKDHTPETTGNESE.

The protein belongs to the peptidase S16 family. In terms of assembly, homohexamer. Organized in a ring with a central cavity.

Its subcellular location is the cytoplasm. The catalysed reaction is Hydrolysis of proteins in presence of ATP.. ATP-dependent serine protease that mediates the selective degradation of mutant and abnormal proteins as well as certain short-lived regulatory proteins. Required for cellular homeostasis and for survival from DNA damage and developmental changes induced by stress. Degrades polypeptides processively to yield small peptide fragments that are 5 to 10 amino acids long. Binds to DNA in a double-stranded, site-specific manner. This chain is Lon protease, found in Chloroherpeton thalassium (strain ATCC 35110 / GB-78).